Consider the following 300-residue polypeptide: Bis(5'-nucleosyl)-tetraphosphatase, symmetrical (300 aa).

It belongs to the Ap4A hydrolase family.

It carries out the reaction P(1),P(4)-bis(5'-adenosyl) tetraphosphate + H2O = 2 ADP + 2 H(+). Functionally, hydrolyzes diadenosine 5',5'''-P1,P4-tetraphosphate to yield ADP. The sequence is that of Bis(5'-nucleosyl)-tetraphosphatase, symmetrical from Pseudomonas syringae pv. tomato (strain ATCC BAA-871 / DC3000).